A 285-amino-acid polypeptide reads, in one-letter code: UPF0173 metal-dependent hydrolase Pnuc_1524 (285 aa).

It belongs to the UPF0173 family.

This chain is UPF0173 metal-dependent hydrolase Pnuc_1524, found in Polynucleobacter asymbioticus (strain DSM 18221 / CIP 109841 / QLW-P1DMWA-1) (Polynucleobacter necessarius subsp. asymbioticus).